Here is a 1889-residue protein sequence, read N- to C-terminus: Protein TIC 214 (1889 aa).

A run of 6 helical transmembrane segments spans residues 11 to 31 (LISL…YYGF), 67 to 87 (FIAG…HLAL), 88 to 108 (GKPH…FFWN), 127 to 147 (LSIQ…HFIL), 175 to 195 (VGWL…LVWI), and 224 to 244 (IFSI…PSPI). Over residues 255-265 (PEEVGESEEER) the composition is skewed to acidic residues. Disordered stretches follow at residues 255–303 (PEEV…PSKE) and 1610–1633 (SNQE…KKKQ). The segment covering 279–293 (NQKQGTEENTSSSLF) has biased composition (polar residues).

This sequence belongs to the TIC214 family. As to quaternary structure, part of the Tic complex.

It localises to the plastid. Its subcellular location is the chloroplast inner membrane. Its function is as follows. Involved in protein precursor import into chloroplasts. May be part of an intermediate translocation complex acting as a protein-conducting channel at the inner envelope. The chain is Protein TIC 214 from Gossypium barbadense (Sea Island cotton).